A 356-amino-acid chain; its full sequence is Trifolitoxin operon protein TfxC (356 aa).

This is Trifolitoxin operon protein TfxC (tfxC) from Rhizobium leguminosarum bv. trifolii.